We begin with the raw amino-acid sequence, 229 residues long: 2-C-methyl-D-erythritol 4-phosphate cytidylyltransferase (229 aa).

This sequence belongs to the IspD/TarI cytidylyltransferase family. IspD subfamily.

It carries out the reaction 2-C-methyl-D-erythritol 4-phosphate + CTP + H(+) = 4-CDP-2-C-methyl-D-erythritol + diphosphate. The protein operates within isoprenoid biosynthesis; isopentenyl diphosphate biosynthesis via DXP pathway; isopentenyl diphosphate from 1-deoxy-D-xylulose 5-phosphate: step 2/6. Functionally, catalyzes the formation of 4-diphosphocytidyl-2-C-methyl-D-erythritol from CTP and 2-C-methyl-D-erythritol 4-phosphate (MEP). The chain is 2-C-methyl-D-erythritol 4-phosphate cytidylyltransferase from Bacillus pumilus (strain SAFR-032).